A 141-amino-acid chain; its full sequence is Nucleoside diphosphate kinase 1 (141 aa).

Residues lysine 11, phenylalanine 59, arginine 87, threonine 93, arginine 104, and asparagine 114 each contribute to the ATP site. Residue histidine 117 is the Pros-phosphohistidine intermediate of the active site.

It belongs to the NDK family. Homotetramer. It depends on Mg(2+) as a cofactor.

The protein resides in the cytoplasm. The enzyme catalyses a 2'-deoxyribonucleoside 5'-diphosphate + ATP = a 2'-deoxyribonucleoside 5'-triphosphate + ADP. It catalyses the reaction a ribonucleoside 5'-diphosphate + ATP = a ribonucleoside 5'-triphosphate + ADP. Major role in the synthesis of nucleoside triphosphates other than ATP. The ATP gamma phosphate is transferred to the NDP beta phosphate via a ping-pong mechanism, using a phosphorylated active-site intermediate. The chain is Nucleoside diphosphate kinase 1 from Protochlamydia amoebophila (strain UWE25).